The chain runs to 320 residues: ATP-dependent 6-phosphofructokinase (320 aa).

Gly-12 is an ATP binding site. 22–26 (RSVIR) contacts ADP. Residues 73–74 (RF) and 103–106 (GDGS) each bind ATP. Asp-104 lines the Mg(2+) pocket. 126–128 (TID) serves as a coordination point for substrate. The Proton acceptor role is filled by Asp-128. Arg-155 provides a ligand contact to ADP. Substrate contacts are provided by residues Arg-163 and 170–172 (MGR). Residues 186-188 (GAE) and 214-216 (KRH) contribute to the ADP site. Substrate is bound by residues Glu-223, Arg-244, and 250-253 (HIQR).

Belongs to the phosphofructokinase type A (PFKA) family. ATP-dependent PFK group I subfamily. Prokaryotic clade 'B1' sub-subfamily. In terms of assembly, homotetramer. Mg(2+) is required as a cofactor.

It localises to the cytoplasm. The catalysed reaction is beta-D-fructose 6-phosphate + ATP = beta-D-fructose 1,6-bisphosphate + ADP + H(+). Its pathway is carbohydrate degradation; glycolysis; D-glyceraldehyde 3-phosphate and glycerone phosphate from D-glucose: step 3/4. With respect to regulation, allosterically activated by ADP and other diphosphonucleosides, and allosterically inhibited by phosphoenolpyruvate. Its function is as follows. Catalyzes the phosphorylation of D-fructose 6-phosphate to fructose 1,6-bisphosphate by ATP, the first committing step of glycolysis. The polypeptide is ATP-dependent 6-phosphofructokinase (Tolumonas auensis (strain DSM 9187 / NBRC 110442 / TA 4)).